Reading from the N-terminus, the 70-residue chain is Aurein-3.1 (70 aa).

The first 22 residues, 1 to 22 (MAFLKKSLFLVLFLGLVSLSIC), serve as a signal peptide directing secretion. A propeptide spanning residues 23-49 (EKEKRQNEEDEDENEAANHEEGSEEKR) is cleaved from the precursor. The segment at 27 to 48 (RQNEEDEDENEAANHEEGSEEK) is disordered. Over residues 38–48 (AANHEEGSEEK) the composition is skewed to basic and acidic residues. At Ile66 the chain carries Isoleucine amide.

As to expression, expressed by the skin dorsal glands.

The protein resides in the secreted. The protein localises to the target cell membrane. Amphipathic alpha-helical antimicrobial peptide with weak to potent activity against Gram-positive bacteria, and no activity against Gram-negative bacteria. Probably acts by disturbing membrane functions with its amphipathic structure. Shows anticancer activity. In Ranoidea aurea (Green and golden bell frog), this protein is Aurein-3.1.